Reading from the N-terminus, the 123-residue chain is MPAKAQPAGKKGSKKAKAPRPSGGKKRRRRRKESYGIYIYKVLKQVHPDTGISSRAMSIMNSFVNDVFERIAAEASRLAHYNKKSTITSREVQTVVRLLLPGELAKHAVSEGTKAVTKYTTSK.

Low complexity predominate over residues methionine 1–lysine 10. Positions methionine 1–glutamate 33 are disordered. Residues lysine 11–lysine 32 show a composition bias toward basic residues. A glycan (O-linked (GlcNAc) serine) is linked at serine 110. Lysine 118 participates in a covalent cross-link: Glycyl lysine isopeptide (Lys-Gly) (interchain with G-Cter in ubiquitin).

The protein belongs to the histone H2B family. The nucleosome is a histone octamer containing two molecules each of H2A, H2B, H3 and H4 assembled in one H3-H4 heterotetramer and two H2A-H2B heterodimers. The octamer wraps approximately 147 bp of DNA. Monoubiquitination of Lys-118 gives a specific tag for epigenetic transcriptional activation and is also prerequisite for histone H3 'Lys-4' and 'Lys-79' methylation. Post-translationally, glcNAcylation at Ser-110 promotes monoubiquitination of Lys-118. It fluctuates in response to extracellular glucose, and associates with transcribed genes.

The protein localises to the nucleus. It is found in the chromosome. In terms of biological role, core component of nucleosome. Nucleosomes wrap and compact DNA into chromatin, limiting DNA accessibility to the cellular machineries which require DNA as a template. Histones thereby play a central role in transcription regulation, DNA repair, DNA replication and chromosomal stability. DNA accessibility is regulated via a complex set of post-translational modifications of histones, also called histone code, and nucleosome remodeling. This Strongylocentrotus purpuratus (Purple sea urchin) protein is Late histone H2B.L1.